A 551-amino-acid chain; its full sequence is Calnexin (551 aa).

An N-terminal signal peptide occupies residues 1-23; it reads MRPQNVAGVAGTGALIMAAGALA. Residues 24-477 lie on the Lumenal side of the membrane; the sequence is DQTVFHPTSL…QAIKQMPEVA (454 aa). The segment at 293 to 315 is disordered; that stretch reads EEEPETIPDPEAEKPEEWDDEED. A helical membrane pass occupies residues 478–498; that stretch reads AGLAAAVFTLLGMLLALFGFI. Topologically, residues 499-551 are cytoplasmic; the sequence is GSAPTKVKQTTVKTKAVAPVAPAGEEEKKALDQAGVEIPAEGSKKRVTRSTKE. The tract at residues 526-551 is disordered; that stretch reads KKALDQAGVEIPAEGSKKRVTRSTKE.

Belongs to the calreticulin family.

The protein resides in the endoplasmic reticulum membrane. In terms of biological role, endoplasmic reticulum (ER) chaperone that functions to stabilize non-native glycoproteins and retain them in the ER until they are properly folded or targeted for ER associated degradation (ERAD). With co-chaperone DNJ1, coordinately maintains ER homeostasis and contributes to maintenance of cell wall architecture. This is Calnexin from Cryptococcus neoformans var. grubii serotype A (strain H99 / ATCC 208821 / CBS 10515 / FGSC 9487) (Filobasidiella neoformans var. grubii).